Reading from the N-terminus, the 160-residue chain is UPF0178 protein PA14_69280 (160 aa).

The protein belongs to the UPF0178 family.

The polypeptide is UPF0178 protein PA14_69280 (Pseudomonas aeruginosa (strain UCBPP-PA14)).